The primary structure comprises 286 residues: Pantothenate synthetase (286 aa).

30 to 37 lines the ATP pocket; it reads MGNLHEGH. The active-site Proton donor is the His-37. Residue Gln-61 participates in (R)-pantoate binding. Gln-61 is a beta-alanine binding site. 149 to 152 lines the ATP pocket; sequence GRKD. Position 155 (Gln-155) interacts with (R)-pantoate. ATP-binding positions include Val-178 and 186-189; that span reads MSSR.

It belongs to the pantothenate synthetase family. In terms of assembly, homodimer.

The protein localises to the cytoplasm. The catalysed reaction is (R)-pantoate + beta-alanine + ATP = (R)-pantothenate + AMP + diphosphate + H(+). It participates in cofactor biosynthesis; (R)-pantothenate biosynthesis; (R)-pantothenate from (R)-pantoate and beta-alanine: step 1/1. Catalyzes the condensation of pantoate with beta-alanine in an ATP-dependent reaction via a pantoyl-adenylate intermediate. The chain is Pantothenate synthetase from Alkalilimnicola ehrlichii (strain ATCC BAA-1101 / DSM 17681 / MLHE-1).